The primary structure comprises 785 residues: Tripartite terminase subunit 1 (785 aa).

The C3H1-type zinc-finger motif lies at 197-225 (CAVCFEELCVTANQGATIARRLADRICNH). A disordered region spans residues 433–489 (GGAADAPKGGAGPDDDGDRVAVEEGTRGLGAPGGGGEDEDRRRGPGGQGPETWGDIA). An ATP-binding site is contributed by 696–703 (FASVYRCG).

It belongs to the herpesviridae TRM1 protein family. Associates with TRM2 and TRM3 to form the tripartite terminase complex. Interacts with portal protein.

The protein localises to the host nucleus. In terms of biological role, component of the molecular motor that translocates viral genomic DNA in empty capsid during DNA packaging. Forms a tripartite terminase complex together with TRM2 and TRM3 in the host cytoplasm. Once the complex reaches the host nucleus, it interacts with the capsid portal vertex. This portal forms a ring in which genomic DNA is translocated into the capsid. TRM1 carries an endonuclease activity that plays an important role for the cleavage of concatemeric viral DNA into unit length genomes. The protein is Tripartite terminase subunit 1 of Human herpesvirus 1 (strain Angelotti) (HHV-1).